A 634-amino-acid chain; its full sequence is Putative ABC transporter ATP-binding protein MG015 homolog (634 aa).

6 helical membrane passes run Val54 to Leu74, Leu111 to Ala131, Val189 to Val209, Val213 to Leu233, Val296 to Ile316, and Ile325 to Leu345. One can recognise an ABC transmembrane type-1 domain in the interval Val54 to Leu364. In terms of domain architecture, ABC transporter spans Ile397 to Ser631. Gly430–Ser437 serves as a coordination point for ATP.

Belongs to the ABC transporter superfamily.

The protein localises to the cell membrane. The chain is Putative ABC transporter ATP-binding protein MG015 homolog from Mycoplasma pneumoniae (strain ATCC 29342 / M129 / Subtype 1) (Mycoplasmoides pneumoniae).